Reading from the N-terminus, the 219-residue chain is ATP-dependent Clp protease proteolytic subunit (219 aa).

Ser-101 serves as the catalytic Nucleophile. Residue His-126 is part of the active site.

The protein belongs to the peptidase S14 family. As to quaternary structure, component of the chloroplastic Clp protease core complex.

The protein resides in the plastid. It localises to the chloroplast stroma. It carries out the reaction Hydrolysis of proteins to small peptides in the presence of ATP and magnesium. alpha-casein is the usual test substrate. In the absence of ATP, only oligopeptides shorter than five residues are hydrolyzed (such as succinyl-Leu-Tyr-|-NHMec, and Leu-Tyr-Leu-|-Tyr-Trp, in which cleavage of the -Tyr-|-Leu- and -Tyr-|-Trp bonds also occurs).. Functionally, cleaves peptides in various proteins in a process that requires ATP hydrolysis. Has a chymotrypsin-like activity. Plays a major role in the degradation of misfolded proteins. In Chara vulgaris (Common stonewort), this protein is ATP-dependent Clp protease proteolytic subunit.